A 372-amino-acid polypeptide reads, in one-letter code: Serine/threonine-protein kinase 17B (372 aa).

One can recognise a Protein kinase domain in the interval 33–293 (TLTPKELGRG…AESCLSHSWL (261 aa)). Residues 39-47 (LGRGKFAVV) and lysine 62 contribute to the ATP site. Aspartate 158 (proton acceptor) is an active-site residue. Positions 305 to 348 (EETSGSSQIQDLTLRSSEEKTSKSSCNGSCGAREDKENIPEDGS) are disordered. Over residues 307 to 319 (TSGSSQIQDLTLR) the composition is skewed to polar residues.

This sequence belongs to the protein kinase superfamily. CAMK Ser/Thr protein kinase family. DAP kinase subfamily. As to quaternary structure, interacts with CHP1; the interaction induces CHP1 to translocate from the Golgi to the nucleus. Autophosphorylated.

It localises to the nucleus. The protein resides in the cell membrane. The protein localises to the endoplasmic reticulum-Golgi intermediate compartment. It carries out the reaction L-seryl-[protein] + ATP = O-phospho-L-seryl-[protein] + ADP + H(+). The catalysed reaction is L-threonyl-[protein] + ATP = O-phospho-L-threonyl-[protein] + ADP + H(+). Functionally, acts as a positive regulator of apoptosis. Phosphorylates myosin light chains. The chain is Serine/threonine-protein kinase 17B (Stk17b) from Mus musculus (Mouse).